The chain runs to 359 residues: Nicotinate-nucleotide--dimethylbenzimidazole phosphoribosyltransferase (359 aa).

Catalysis depends on E318, which acts as the Proton acceptor.

This sequence belongs to the CobT family. As to quaternary structure, homodimer.

The catalysed reaction is 5,6-dimethylbenzimidazole + nicotinate beta-D-ribonucleotide = alpha-ribazole 5'-phosphate + nicotinate + H(+). It functions in the pathway nucleoside biosynthesis; alpha-ribazole biosynthesis; alpha-ribazole from 5,6-dimethylbenzimidazole: step 1/2. Functionally, catalyzes the synthesis of alpha-ribazole-5'-phosphate from nicotinate mononucleotide (NAMN) and 5,6-dimethylbenzimidazole (DMB). The sequence is that of Nicotinate-nucleotide--dimethylbenzimidazole phosphoribosyltransferase from Escherichia coli (strain ATCC 8739 / DSM 1576 / NBRC 3972 / NCIMB 8545 / WDCM 00012 / Crooks).